The sequence spans 274 residues: Anamorsin homolog (274 aa).

Residues M1–S154 form an N-terminal SAM-like domain region. Residues S154–M185 are linker. [2Fe-2S] cluster-binding residues include C196, C205, C208, and C210. A fe-S binding site A region spans residues C196–C210. C235, C238, C246, and C249 together coordinate [4Fe-4S] cluster. Short sequence motifs (cx2C motif) lie at residues C235–C238 and C246–C249. The tract at residues C235–C249 is fe-S binding site B.

This sequence belongs to the anamorsin family. In terms of assembly, monomer. Requires [2Fe-2S] cluster as cofactor. [4Fe-4S] cluster serves as cofactor.

The protein resides in the cytoplasm. It localises to the mitochondrion intermembrane space. Functionally, component of the cytosolic iron-sulfur (Fe-S) protein assembly (CIA) machinery. Required for the maturation of extramitochondrial Fe-S proteins. Part of an electron transfer chain functioning in an early step of cytosolic Fe-S biogenesis, facilitating the de novo assembly of a [4Fe-4S] cluster on the cytosolic Fe-S scaffold complex. Electrons are transferred from NADPH via a FAD- and FMN-containing diflavin oxidoreductase. Together with the diflavin oxidoreductase, also required for the assembly of the diferric tyrosyl radical cofactor of ribonucleotide reductase (RNR), probably by providing electrons for reduction during radical cofactor maturation in the catalytic small subunit. The polypeptide is Anamorsin homolog (Ricinus communis (Castor bean)).